Reading from the N-terminus, the 159-residue chain is 17.9 kDa class II heat shock protein (159 aa).

The sHSP domain occupies Asp43–Lys157.

This sequence belongs to the small heat shock protein (HSP20) family.

The protein localises to the cytoplasm. This is 17.9 kDa class II heat shock protein (HSP17.9-D) from Glycine max (Soybean).